We begin with the raw amino-acid sequence, 352 residues long: UDP-N-acetylglucosamine--N-acetylmuramyl-(pentapeptide) pyrophosphoryl-undecaprenol N-acetylglucosamine transferase (352 aa).

Residues 12 to 14 (TGG), Asn124, Arg160, Ser188, and Gln287 contribute to the UDP-N-acetyl-alpha-D-glucosamine site.

It belongs to the glycosyltransferase 28 family. MurG subfamily.

Its subcellular location is the cell inner membrane. It catalyses the reaction di-trans,octa-cis-undecaprenyl diphospho-N-acetyl-alpha-D-muramoyl-L-alanyl-D-glutamyl-meso-2,6-diaminopimeloyl-D-alanyl-D-alanine + UDP-N-acetyl-alpha-D-glucosamine = di-trans,octa-cis-undecaprenyl diphospho-[N-acetyl-alpha-D-glucosaminyl-(1-&gt;4)]-N-acetyl-alpha-D-muramoyl-L-alanyl-D-glutamyl-meso-2,6-diaminopimeloyl-D-alanyl-D-alanine + UDP + H(+). It functions in the pathway cell wall biogenesis; peptidoglycan biosynthesis. Functionally, cell wall formation. Catalyzes the transfer of a GlcNAc subunit on undecaprenyl-pyrophosphoryl-MurNAc-pentapeptide (lipid intermediate I) to form undecaprenyl-pyrophosphoryl-MurNAc-(pentapeptide)GlcNAc (lipid intermediate II). In Dechloromonas aromatica (strain RCB), this protein is UDP-N-acetylglucosamine--N-acetylmuramyl-(pentapeptide) pyrophosphoryl-undecaprenol N-acetylglucosamine transferase.